Reading from the N-terminus, the 114-residue chain is Small ribosomal subunit protein bS16 (114 aa).

The disordered stretch occupies residues 87–114 (AFREQPVQSAPKKKAQERAAERAKAAEA). Residues 100–114 (KAQERAAERAKAAEA) show a composition bias toward basic and acidic residues.

This sequence belongs to the bacterial ribosomal protein bS16 family.

The chain is Small ribosomal subunit protein bS16 from Acidiphilium cryptum (strain JF-5).